We begin with the raw amino-acid sequence, 363 residues long: NAD(P)H-quinone oxidoreductase subunit 1, chloroplastic (363 aa).

6 helical membrane passes run 30–50 (LIPIFTLVLGITIGVLVIVWL), 104–124 (IAVISILLSYLVIPFSYHLVL), 127–147 (LSIGVFLWIAISSIAPVGLLM), 248–268 (YSGIKFGLFYVASYLNLLVSS), 300–320 (VFGTIIGIFITLAKTYLFLFI), and 343–363 (FLLPISLGNLLLTTCSQLISL).

It belongs to the complex I subunit 1 family. NDH is composed of at least 16 different subunits, 5 of which are encoded in the nucleus.

It is found in the plastid. Its subcellular location is the chloroplast thylakoid membrane. The enzyme catalyses a plastoquinone + NADH + (n+1) H(+)(in) = a plastoquinol + NAD(+) + n H(+)(out). The catalysed reaction is a plastoquinone + NADPH + (n+1) H(+)(in) = a plastoquinol + NADP(+) + n H(+)(out). NDH shuttles electrons from NAD(P)H:plastoquinone, via FMN and iron-sulfur (Fe-S) centers, to quinones in the photosynthetic chain and possibly in a chloroplast respiratory chain. The immediate electron acceptor for the enzyme in this species is believed to be plastoquinone. Couples the redox reaction to proton translocation, and thus conserves the redox energy in a proton gradient. The chain is NAD(P)H-quinone oxidoreductase subunit 1, chloroplastic from Lactuca sativa (Garden lettuce).